Consider the following 221-residue polypeptide: Vesicle-associated membrane protein 713 (221 aa).

N-acetylalanine is present on Ala-2. The Cytoplasmic portion of the chain corresponds to 2–190 (AIIFALVARG…RTIMWWRNVK (189 aa)). Residues 7–112 (LVARGTVVLS…SMNDEFSRVL (106 aa)) form the Longin domain. The region spanning 127–187 (RMSRIKGEMS…RRYRTIMWWR (61 aa)) is the v-SNARE coiled-coil homology domain. A helical; Anchor for type IV membrane protein membrane pass occupies residues 191-211 (LTIALILVLALVVYIAMAFVC). Over 212 to 221 (HGPSLPSCFK) the chain is Vesicular.

This sequence belongs to the synaptobrevin family. As to quaternary structure, interacts with subunits of the vacuole protein sorting (HOPS) complex including VPS11, VCL1, VPS18, VPS33, VPS39 and VPS41. As to expression, highly expressed in stems and roots. Detected in flowers and leaves.

It localises to the vacuole membrane. The protein resides in the prevacuolar compartment membrane. In terms of biological role, involved in the targeting and/or fusion of transport vesicles to their target membrane. The sequence is that of Vesicle-associated membrane protein 713 from Arabidopsis thaliana (Mouse-ear cress).